The chain runs to 345 residues: Protein RecA (345 aa).

65 to 72 (GPESSGKT) contributes to the ATP binding site. Basic and acidic residues predominate over residues 326–336 (EKFQPAEAARE). The tract at residues 326–345 (EKFQPAEAAREEGDDEGEDE) is disordered.

The protein belongs to the RecA family.

It is found in the cytoplasm. Functionally, can catalyze the hydrolysis of ATP in the presence of single-stranded DNA, the ATP-dependent uptake of single-stranded DNA by duplex DNA, and the ATP-dependent hybridization of homologous single-stranded DNAs. It interacts with LexA causing its activation and leading to its autocatalytic cleavage. This Stenotrophomonas maltophilia (strain K279a) protein is Protein RecA.